A 969-amino-acid polypeptide reads, in one-letter code: Isoleucine--tRNA ligase (969 aa).

The 'HIGH' region signature appears at 68–78 (PYANGNLHMGH). An L-isoleucyl-5'-AMP-binding site is contributed by glutamate 584. A 'KMSKS' region motif is present at residues 625-629 (KMSKS). Lysine 628 contributes to the ATP binding site. Zn(2+) contacts are provided by cysteine 938, cysteine 941, cysteine 958, and cysteine 961.

Belongs to the class-I aminoacyl-tRNA synthetase family. IleS type 1 subfamily. As to quaternary structure, monomer. Requires Zn(2+) as cofactor.

The protein resides in the cytoplasm. The enzyme catalyses tRNA(Ile) + L-isoleucine + ATP = L-isoleucyl-tRNA(Ile) + AMP + diphosphate. Functionally, catalyzes the attachment of isoleucine to tRNA(Ile). As IleRS can inadvertently accommodate and process structurally similar amino acids such as valine, to avoid such errors it has two additional distinct tRNA(Ile)-dependent editing activities. One activity is designated as 'pretransfer' editing and involves the hydrolysis of activated Val-AMP. The other activity is designated 'posttransfer' editing and involves deacylation of mischarged Val-tRNA(Ile). The chain is Isoleucine--tRNA ligase from Prochlorococcus marinus (strain SARG / CCMP1375 / SS120).